Reading from the N-terminus, the 343-residue chain is MPQTLQLTNPMDMHLHLREGEMLSAILPFSANPFSAAVVMPNLKTPITTTAQALAYKRQILSLCSTSFEPLMSIFLTPDLDKQELIRAKEAGIHILKLYPKGSTTGSEKGVKEMLCEKTLHIFEIAQELGFILSIHGESNGFCMEREYEFLPIFAHIAQHFPRLRIIIEHMSDRRSLELIEQYPNLYATLTLHHITMNLDDVLGGGINPHHFCKPMLKTKKDQQALLQAALNAHPKVSFGSDSAPHLESAKLNSKGAAGIFSAPILLPALAEVFAFHNALDCLQTFISNRAIANYKLKHFPIKTITLERVENPVPPYINTPLGHIIPLRAQTNLSWRIKEENR.

His14 and His16 together coordinate Zn(2+). Substrate contacts are provided by residues 16–18 (HLR) and Asn42. Zn(2+) contacts are provided by Lys97, His136, His170, and Asp242. Lys97 carries the post-translational modification N6-carboxylysine. His136 contacts substrate. The active site involves Asp242. Residues His246 and Ala258 each coordinate substrate.

The protein belongs to the metallo-dependent hydrolases superfamily. DHOase family. Class II DHOase subfamily. Homodimer. It depends on Zn(2+) as a cofactor.

It catalyses the reaction (S)-dihydroorotate + H2O = N-carbamoyl-L-aspartate + H(+). The protein operates within pyrimidine metabolism; UMP biosynthesis via de novo pathway; (S)-dihydroorotate from bicarbonate: step 3/3. Functionally, catalyzes the reversible cyclization of carbamoyl aspartate to dihydroorotate. This chain is Dihydroorotase, found in Helicobacter hepaticus (strain ATCC 51449 / 3B1).